A 624-amino-acid chain; its full sequence is DNA-directed RNA polymerase subunit gamma (624 aa).

Residues Cys70, Cys72, Cys85, and Cys88 each contribute to the Zn(2+) site. The Mg(2+) site is built by Asp466, Asp468, and Asp470.

Belongs to the RNA polymerase beta' chain family. RpoC1 subfamily. In cyanobacteria the RNAP catalytic core is composed of 2 alpha, 1 beta, 1 beta', 1 gamma and 1 omega subunit. When a sigma factor is associated with the core the holoenzyme is formed, which can initiate transcription. Mg(2+) serves as cofactor. The cofactor is Zn(2+).

It catalyses the reaction RNA(n) + a ribonucleoside 5'-triphosphate = RNA(n+1) + diphosphate. Functionally, DNA-dependent RNA polymerase catalyzes the transcription of DNA into RNA using the four ribonucleoside triphosphates as substrates. This Synechococcus elongatus (strain ATCC 33912 / PCC 7942 / FACHB-805) (Anacystis nidulans R2) protein is DNA-directed RNA polymerase subunit gamma.